An 83-amino-acid chain; its full sequence is Bublin coiled-coil protein (83 aa).

Positions 1–24 (MSGPNGDLGMPVEAGAEGEEDGFG) are disordered. Positions 25 to 74 (EAEYAAINSMLDQINSCLDHLEEKNDHLHARLQELLESNRQTRLEFQQQL) form a coiled coil. S82 is subject to Phosphoserine.

The protein belongs to the UPF0184 (EST00098) family.

Its subcellular location is the cell junction. It is found in the cytoplasm. The protein localises to the cytoskeleton. Functionally, essential for intermediate filament organization in intestinal cells, interacts with intermediate filament and regulates intestinal lumen morphology. This Homo sapiens (Human) protein is Bublin coiled-coil protein.